The sequence spans 476 residues: Glycogen synthase (476 aa).

Residue lysine 15 participates in ADP-alpha-D-glucose binding.

This sequence belongs to the glycosyltransferase 1 family. Bacterial/plant glycogen synthase subfamily.

It catalyses the reaction [(1-&gt;4)-alpha-D-glucosyl](n) + ADP-alpha-D-glucose = [(1-&gt;4)-alpha-D-glucosyl](n+1) + ADP + H(+). The protein operates within glycan biosynthesis; glycogen biosynthesis. Functionally, synthesizes alpha-1,4-glucan chains using ADP-glucose. The chain is Glycogen synthase from Yersinia pseudotuberculosis serotype O:1b (strain IP 31758).